The primary structure comprises 432 residues: SVP1-like protein 2 (432 aa).

2 WD repeats span residues 223–263 (AHKS…LLYE) and 268–307 (LDRA…TSSG).

Belongs to the WD repeat PROPPIN family.

The protein resides in the vacuole membrane. It localises to the cytoplasmic vesicle membrane. Functionally, involved in mitochondrial or peroxisomal functions and amino acid signaling pathways. The protein is SVP1-like protein 2 (HSV2) of Debaryomyces hansenii (strain ATCC 36239 / CBS 767 / BCRC 21394 / JCM 1990 / NBRC 0083 / IGC 2968) (Yeast).